Reading from the N-terminus, the 257-residue chain is MAPCLLLVLFLLPALATGHQHPSTLGSSALSEWRSAKASYYAADPEDAIGGACGFGDLGKHGYGMATVGLSTALFERGAACGGCYEVKCVDDLKYCLPGTSIVVTATNFCAPNFGLPADAGGVCNPPNHHFLLPIQSFEKIALWKAGVMPIQYRRVNCLRDGGVRFAVAGRSFFLTVLISNVGGAGDVRSVKIKGTESGWLSMGRNWGQIWHINSDFRGQPLSFELTSSDGKTLTNYNVVPKEWDFGKTYTGKQFLL.

The first 18 residues, 1-18 (MAPCLLLVLFLLPALATG), serve as a signal peptide directing secretion. Residues 50 to 163 (GGACGFGDLG…RRVNCLRDGG (114 aa)) form the Expansin-like EG45 domain. The region spanning 173-252 (FFLTVLISNV…EWDFGKTYTG (80 aa)) is the Expansin-like CBD domain.

The protein belongs to the expansin family. Expansin A subfamily. As to expression, expressed in panicles and flowers.

It is found in the secreted. It localises to the cell wall. Its subcellular location is the membrane. May cause loosening and extension of plant cell walls by disrupting non-covalent bonding between cellulose microfibrils and matrix glucans. No enzymatic activity has been found. May be required for rapid internodal elongation in deepwater rice during submergence. This chain is Expansin-A10 (EXPA10), found in Oryza sativa subsp. japonica (Rice).